Here is a 319-residue protein sequence, read N- to C-terminus: Acetyl-coenzyme A carboxylase carboxyl transferase subunit alpha (319 aa).

Residues 35 to 296 (NIDEEVHRLR…KAQLLEDLAD (262 aa)) enclose the CoA carboxyltransferase C-terminal domain.

This sequence belongs to the AccA family. Acetyl-CoA carboxylase is a heterohexamer composed of biotin carboxyl carrier protein (AccB), biotin carboxylase (AccC) and two subunits each of ACCase subunit alpha (AccA) and ACCase subunit beta (AccD).

It is found in the cytoplasm. It catalyses the reaction N(6)-carboxybiotinyl-L-lysyl-[protein] + acetyl-CoA = N(6)-biotinyl-L-lysyl-[protein] + malonyl-CoA. It participates in lipid metabolism; malonyl-CoA biosynthesis; malonyl-CoA from acetyl-CoA: step 1/1. In terms of biological role, component of the acetyl coenzyme A carboxylase (ACC) complex. First, biotin carboxylase catalyzes the carboxylation of biotin on its carrier protein (BCCP) and then the CO(2) group is transferred by the carboxyltransferase to acetyl-CoA to form malonyl-CoA. In Salmonella paratyphi C (strain RKS4594), this protein is Acetyl-coenzyme A carboxylase carboxyl transferase subunit alpha.